Consider the following 281-residue polypeptide: 2-dehydro-3-deoxyphosphooctonate aldolase (281 aa).

It belongs to the KdsA family.

The protein resides in the cytoplasm. It catalyses the reaction D-arabinose 5-phosphate + phosphoenolpyruvate + H2O = 3-deoxy-alpha-D-manno-2-octulosonate-8-phosphate + phosphate. The protein operates within carbohydrate biosynthesis; 3-deoxy-D-manno-octulosonate biosynthesis; 3-deoxy-D-manno-octulosonate from D-ribulose 5-phosphate: step 2/3. It participates in bacterial outer membrane biogenesis; lipopolysaccharide biosynthesis. The chain is 2-dehydro-3-deoxyphosphooctonate aldolase from Pseudomonas syringae pv. syringae (strain B728a).